A 573-amino-acid polypeptide reads, in one-letter code: Isocitrate dehydrogenase kinase/phosphatase (573 aa).

Residues 315–321 (APGIRGM) and Lys336 contribute to the ATP site. Residue Asp371 is part of the active site.

It belongs to the AceK family.

The protein resides in the cytoplasm. The catalysed reaction is L-seryl-[isocitrate dehydrogenase] + ATP = O-phospho-L-seryl-[isocitrate dehydrogenase] + ADP + H(+). In terms of biological role, bifunctional enzyme which can phosphorylate or dephosphorylate isocitrate dehydrogenase (IDH) on a specific serine residue. This is a regulatory mechanism which enables bacteria to bypass the Krebs cycle via the glyoxylate shunt in response to the source of carbon. When bacteria are grown on glucose, IDH is fully active and unphosphorylated, but when grown on acetate or ethanol, the activity of IDH declines drastically concomitant with its phosphorylation. This Enterobacter sp. (strain 638) protein is Isocitrate dehydrogenase kinase/phosphatase.